The sequence spans 507 residues: Glucose-6-phosphate isomerase (507 aa).

Catalysis depends on E338, which acts as the Proton donor. Active-site residues include H369 and K479.

This sequence belongs to the GPI family.

The protein resides in the cytoplasm. It carries out the reaction alpha-D-glucose 6-phosphate = beta-D-fructose 6-phosphate. The protein operates within carbohydrate biosynthesis; gluconeogenesis. Its pathway is carbohydrate degradation; glycolysis; D-glyceraldehyde 3-phosphate and glycerone phosphate from D-glucose: step 2/4. In terms of biological role, provides a gateway for fructose into the Entner-Doudouroff pathway. Its function is as follows. Catalyzes the reversible isomerization of glucose-6-phosphate to fructose-6-phosphate. The polypeptide is Glucose-6-phosphate isomerase (Zymomonas mobilis subsp. mobilis (strain ATCC 31821 / ZM4 / CP4)).